The primary structure comprises 956 residues: MDLLYGLVWLLTVLLEGISGQGVYAPPTVRIVHSGLACNIEEERYSERVYTIREGETLELTCLVTGHPRPQIRWTKTAGSASDRFQDSSVFNETLRITNIQRHQGGRYYCKAENGLGSPAIKSIRVDVYYLDDPVVTVHQSIGEAKEQFYYERTVFLRCVANSNPPVRYSWRRGQEVLLQGSDKGVEIYEPFFTQGETKILKLKNLRPQDYANYSCIASVRNVCNIPDKMVSFRLSNKTASPSIKLLVDDPIVVNPGEAITLVCVTTGGEPAPSLTWVRSFGTLPEKTVLNGGTLTIPAITSDDAGTYSCIANNNVGNPAKKSTNIIVRALKKGRFWITPDPYHKDDNIQIGREVKISCQVEAVPSEELTFSWFKNGRPLRSSERMVITQTDPDVSPGTTNLDIIDLKFTDFGTYTCVASLKGGGISDISIDVNISSSTVPPNLTVPQEKSPLVTREGDTIELQCQVTGKPKPIILWSRADKEVAMPDGSMQMESYDGTLRIVNVSREMSGMYRCQTSQYNGFNVKPREALVQLIVQYPPAVEPAFLEIRQGQDRSVTMSCRVLRAYPIRVLTYEWRLGNKLLRTGQFDSQEYTEYAVKSLSNENYGVYNCSIINEAGAGRCSFLVTGKAYAPEFYYDTYNPVWQNRHRVYSYSLQWTQMNPDAVDRIVAYRLGIRQAGQQRWWEQEIKINGNIQKGELITYNLTELIKPEAYEVRLTPLTKFGEGDSTIRVIKYSAPVNPHLREFHCGFEDGNICLFTQDDTDNFDWTKQSTATRNTKYTPNTGPNADRSGSKEGFYMYIETSRPRLEGEKARLLSPVFSIAPKNPYGPTNTAYCFSFFYHMYGQHIGVLNVYLRLKGQTTIENPLWSSSGNKGQRWNEAHVNIYPITSFQLIFEGIRGPGIEGDIAIDDVSIAEGECAKQDLATKNSVDGAVGILVHIWLFPIIVLISILSPRR.

The N-terminal stretch at 1–25 is a signal peptide; that stretch reads MDLLYGLVWLLTVLLEGISGQGVYA. Ig-like domains lie at 27–127 and 134–232; these read PTVR…IRVD and PVVT…KMVS. Disulfide bonds link cysteine 62-cysteine 110 and cysteine 159-cysteine 216. Asparagine 92, asparagine 213, and asparagine 237 each carry an N-linked (GlcNAc...) asparagine glycan. Ig-like domains follow at residues 242-328, 340-436, 442-533, and 540-627; these read PSIK…NIIV, PDPY…VNIS, PNLT…ALVQ, and PAVE…FLVT. 2 disulfide bridges follow: cysteine 264–cysteine 310 and cysteine 359–cysteine 417. Asparagine 434, asparagine 443, asparagine 504, asparagine 610, and asparagine 703 each carry an N-linked (GlcNAc...) asparagine glycan. 2 cysteine pairs are disulfide-bonded: cysteine 465–cysteine 515 and cysteine 561–cysteine 611. Residues 638-739 enclose the Fibronectin type-III domain; the sequence is DTYNPVWQNR…IRVIKYSAPV (102 aa). One can recognise an MAM domain in the interval 746 to 921; that stretch reads FHCGFEDGNI…VSIAEGECAK (176 aa). Aspartate 931 is lipidated: GPI-anchor amidated aspartate. Positions 932-956 are cleaved as a propeptide — removed in mature form; the sequence is GAVGILVHIWLFPIIVLISILSPRR.

As to quaternary structure, interacts (through the Ig-like domains) with NLGN2. In terms of tissue distribution, detected in Leydig cells, syncytiotrophoblast, duodenal villi epithelial cells and neutrophils from kidney and cutaneous squamous cell carcinoma (at protein level).

It localises to the cell membrane. Functionally, may be involved in cell-cell interactions. In Homo sapiens (Human), this protein is MAM domain-containing glycosylphosphatidylinositol anchor protein 2 (MDGA2).